The following is a 220-amino-acid chain: Putative F-box protein At3g20705 (220 aa).

An F-box domain is found at 1-51 (MMMMSNLPNDLVEEILSRVTVTFMRTVRSICKKWNALTKDRSFTNKYIRNI).

The polypeptide is Putative F-box protein At3g20705 (Arabidopsis thaliana (Mouse-ear cress)).